We begin with the raw amino-acid sequence, 1025 residues long: Multidrug resistance protein MdtC (1025 aa).

The next 12 helical transmembrane spans lie at 3 to 23 (FFAL…AITL), 333 to 353 (EVEQ…FLFL), 360 to 380 (IIPA…MYLC), 387 to 407 (LSLM…IVVL), 431 to 451 (VGFT…PLLL), 463 to 483 (FAVT…TLTP), 528 to 548 (LVGV…ISIP), 853 to 873 (VILI…LYES), 875 to 895 (VHPL…LLAL), 897 to 917 (LFNA…IGIV), 953 to 973 (PIMM…LSGG), and 984 to 1004 (ITIV…TPVV).

The protein belongs to the resistance-nodulation-cell division (RND) (TC 2.A.6) family. MdtC subfamily. Part of a tripartite efflux system composed of MdtA, MdtB and MdtC. MdtC forms a heteromultimer with MdtB.

The protein resides in the cell inner membrane. This Shigella sonnei (strain Ss046) protein is Multidrug resistance protein MdtC.